Here is a 143-residue protein sequence, read N- to C-terminus: Flagellar assembly factor FliW (143 aa).

This sequence belongs to the FliW family. In terms of assembly, interacts with translational regulator CsrA and flagellin(s).

The protein localises to the cytoplasm. Acts as an anti-CsrA protein, binds CsrA and prevents it from repressing translation of its target genes, one of which is flagellin. Binds to flagellin and participates in the assembly of the flagellum. This is Flagellar assembly factor FliW from Clostridium novyi (strain NT).